Here is a 1117-residue protein sequence, read N- to C-terminus: Reverse gyrase (1117 aa).

The RG N-terminal-type zinc finger occupies 3–42 (LATGAKYYHSCINCGGINTDTRNEKGLPCEVCLPFEDGDV). Positions 13, 16, 31, and 34 each coordinate Zn(2+). ATP-binding positions include glutamine 84 and 101 to 108 (APTGVGKT). One can recognise a Helicase ATP-binding domain in the interval 88 to 284 (AKRLLLSKSF…LFRELLGFEI (197 aa)). The DEAD box motif lies at 206 to 209 (DDVD). Positions 551 to 1117 (KDMKSRMIIV…EELNEILIKN (567 aa)) are topoisomerase I. Residues 555–712 (SRMIIVESPT…NVQRIEMHEI (158 aa)) enclose the Toprim domain. A Mg(2+)-binding site is contributed by glutamate 561. Residues 631–658 (IKRCSSCGAQFTDELPRCPYCNSDKIDD) form an RG C-terminal-type zinc finger. Zn(2+)-binding residues include cysteine 634, cysteine 637, cysteine 648, and cysteine 651. Residue aspartate 681 coordinates Mg(2+). The Topo IA-type catalytic domain occupies 728 to 1114 (DVNLVKSQIV…NLYEELNEIL (387 aa)). Tyrosine 864 (O-(5'-phospho-DNA)-tyrosine intermediate) is an active-site residue.

In the N-terminal section; belongs to the DEAD box helicase family. DDVD subfamily. This sequence in the C-terminal section; belongs to the type IA topoisomerase family. In terms of assembly, monomer. Zn(2+) is required as a cofactor. Requires Mg(2+) as cofactor.

The protein localises to the cytoplasm. It carries out the reaction ATP + H2O = ADP + phosphate + H(+). Functionally, modifies the topological state of DNA by introducing positive supercoils in an ATP-dependent process, increasing the linking number in steps of +1; also positively supercoils with dATP and ATP-gamma-S. With UTP or dTTP relaxes negatively supercoiled DNA, in the absence of any nucleotide partially relaxes negative supercoils. In the absence of nucleotide has a higher affinity for dsDNA with a single-stranded tail than dsDNA or ssDNA. Has an ATPase activity in the absence of DNA. Binds to single-stranded DNA, transiently cleaves and then rejoins the ends, introducing a positive supercoil in the process. The scissile phosphodiester is attacked by the catalytic tyrosine of the enzyme, resulting in the formation of a DNA-(5'-phosphotyrosyl)-enzyme intermediate. Probably involved in rewinding DNA strands in regions of the chromosome that have opened up to allow replication, transcription, DNA repair and/or for DNA protection. This chain is Reverse gyrase, found in Caldanaerobacter subterraneus subsp. tengcongensis (strain DSM 15242 / JCM 11007 / NBRC 100824 / MB4) (Thermoanaerobacter tengcongensis).